We begin with the raw amino-acid sequence, 143 residues long: Large ribosomal subunit protein uL11 (143 aa).

This sequence belongs to the universal ribosomal protein uL11 family. As to quaternary structure, part of the ribosomal stalk of the 50S ribosomal subunit. Interacts with L10 and the large rRNA to form the base of the stalk. L10 forms an elongated spine to which L12 dimers bind in a sequential fashion forming a multimeric L10(L12)X complex. One or more lysine residues are methylated.

Forms part of the ribosomal stalk which helps the ribosome interact with GTP-bound translation factors. This chain is Large ribosomal subunit protein uL11, found in Rhizobium rhizogenes (strain K84 / ATCC BAA-868) (Agrobacterium radiobacter).